A 374-amino-acid chain; its full sequence is Gustatory receptor 23a (374 aa).

At 1 to 6 (MFPPTR) the chain is on the cytoplasmic side. Residues 7-27 (VQASSRVVLKIFHFILVAFSL) traverse the membrane as a helical segment. Residues 28 to 36 (RSRRLSRLV) are Extracellular-facing. Residues 37 to 57 (LWLQFLGWLTWFISMWTQSVI) form a helical membrane-spanning segment. The Cytoplasmic segment spans residues 58–72 (YAQTIDCTLDCSLRH). A helical membrane pass occupies residues 73 to 93 (ILTFFQTVSHAFIVVTSFLDG). At 94 to 112 (FRIKQDQLDEPIAFEDSDP) the chain is on the extracellular side. The helical transmembrane segment at 113-133 (WLAFTVLAMLVPTLGVEYLVC) threads the bilayer. The Cytoplasmic portion of the chain corresponds to 134–226 (SNAPEYAFRI…YNDLHYLFVR (93 aa)). The chain crosses the membrane as a helical span at residues 227-247 (INGYFGGSLLTIIIVHFAIFV). Topologically, residues 248–263 (SNSYWLFVDIRTRPWR) are extracellular. The chain crosses the membrane as a helical span at residues 264 to 284 (IYAILLNLGFIFNVALQMAAA). Residues 285 to 343 (CWHCQQSYNLGRQIGCLISKLVKPQGSKLYNDLVSEFSLQTLHQRFVVTAKDFFSLNLH) lie on the Cytoplasmic side of the membrane. Residues 344 to 364 (LLSSMFAAVVTYLVILIQFMF) form a helical membrane-spanning segment. Residues 365–374 (AERSSTRGSG) lie on the Extracellular side of the membrane.

Belongs to the insect chemoreceptor superfamily. Gustatory receptor (GR) family. Gr2a subfamily. As to expression, expressed in the adult labellar chemosensory neurons and labral sense organ. Expressed in neurons of the dorsal pharyngeal sense organ of larvae.

It localises to the cell membrane. Its function is as follows. Probable gustatory receptor which mediates acceptance or avoidance behavior, depending on its substrates. In Drosophila melanogaster (Fruit fly), this protein is Gustatory receptor 23a (Gr23a).